Consider the following 447-residue polypeptide: Chitobiosyldiphosphodolichol beta-mannosyltransferase (447 aa).

Residues 1–8 (MSVFGFDN) lie on the Lumenal side of the membrane. Residues 9 to 29 (IPTWLWWLLAIYLATPFVLYV) traverse the membrane as a helical segment. Residues 30–127 (VQPYLFYEGK…LCSMFWKLRA (98 aa)) are Cytoplasmic-facing. Positions 128-148 (VDYILLQNPPTIPILPIAVVV) form an intramembrane region, helical. At 149–447 (KTFSRAKLII…ALSELKIIHK (299 aa)) the chain is on the lumenal side.

Belongs to the glycosyltransferase group 1 family.

The protein localises to the endoplasmic reticulum membrane. The catalysed reaction is an N,N'-diacetylchitobiosyl-diphospho-di-trans,poly-cis-dolichol + GDP-alpha-D-mannose = a beta-D-Man-(1-&gt;4)-beta-D-GlcNAc-(1-&gt;4)-alpha-D-GlcNAc-diphospho-di-trans,poly-cis-dolichol + GDP + H(+). The protein operates within protein modification; protein glycosylation. Participates in the formation of the lipid-linked precursor oligosaccharide for N-glycosylation. Involved in assembling the dolichol-pyrophosphate-GlcNAc(2)-Man(5) intermediate on the cytoplasmic surface of the ER. The chain is Chitobiosyldiphosphodolichol beta-mannosyltransferase (ALG1) from Kluyveromyces lactis (strain ATCC 8585 / CBS 2359 / DSM 70799 / NBRC 1267 / NRRL Y-1140 / WM37) (Yeast).